The primary structure comprises 283 residues: Pantothenate synthetase (283 aa).

ATP is bound at residue 30–37; it reads MGNLHAGH. The Proton donor role is filled by His-37. Gln-61 is a binding site for (R)-pantoate. A beta-alanine-binding site is contributed by Gln-61. 149–152 serves as a coordination point for ATP; the sequence is GEKD. Gln-155 serves as a coordination point for (R)-pantoate. ATP contacts are provided by residues Leu-178 and 186-189; that span reads MSSR.

It belongs to the pantothenate synthetase family. In terms of assembly, homodimer.

The protein resides in the cytoplasm. The enzyme catalyses (R)-pantoate + beta-alanine + ATP = (R)-pantothenate + AMP + diphosphate + H(+). It functions in the pathway cofactor biosynthesis; (R)-pantothenate biosynthesis; (R)-pantothenate from (R)-pantoate and beta-alanine: step 1/1. Its function is as follows. Catalyzes the condensation of pantoate with beta-alanine in an ATP-dependent reaction via a pantoyl-adenylate intermediate. In Hahella chejuensis (strain KCTC 2396), this protein is Pantothenate synthetase.